A 396-amino-acid chain; its full sequence is MIISAASDYRAAAQRTLPPFLFHYIDGGAYAEYTLRRNVEDLSQVALRQRVLKNMSDLSLETTLFNETLSMPVALAPVGLCGMYARRGEVQAAAAADAKGIPFTLSTVSVCPIEEVAPTLKRPMWFQLYVLRDRGFMRNALERAKAAGCSTLVFTVDMPTPGARYRDAHSGMSGPNAAMRRYWQAVMHPKWAWDVGLNGRPHDLGNISAYLGKPTGLEDYIGWLANNFDPSISWKDLEWIREFWDGPMVIKGILDPEDARDAVRFGADGIVVSNHGGRQLDGVLSSARALPAIADAVKGDIAILADSGIRNGLDVVRMIALGADTVLLGRAYLYALATAGKAGVANLLDLIEKEMKVAMTLTGAKSISEISGDSLVQELGRSLPAALAPMSKGDAA.

One can recognise an FMN hydroxy acid dehydrogenase domain in the interval 1–380 (MIISAASDYR…SGDSLVQELG (380 aa)). Residue Y24 participates in substrate binding. Positions 106 and 127 each coordinate FMN. Residue Y129 coordinates substrate. FMN is bound at residue T155. R164 lines the substrate pocket. K251 is a binding site for FMN. The active-site Proton acceptor is the H275. R278 contacts substrate. 306 to 330 (DSGIRNGLDVVRMIALGADTVLLGR) provides a ligand contact to FMN.

Belongs to the FMN-dependent alpha-hydroxy acid dehydrogenase family. FMN is required as a cofactor.

It is found in the cell inner membrane. It carries out the reaction (S)-lactate + A = pyruvate + AH2. Its function is as follows. Catalyzes the conversion of L-lactate to pyruvate. Is coupled to the respiratory chain. The chain is L-lactate dehydrogenase from Salmonella schwarzengrund (strain CVM19633).